The sequence spans 888 residues: G-protein coupled receptor family C group 6 member A (888 aa).

The signal sequence occupies residues Met1 to Ser15. Topologically, residues Gln16–Ala568 are extracellular. Residues Asn251, Asn322, Asn532, and Asn544 are each glycosylated (N-linked (GlcNAc...) asparagine). A helical transmembrane segment spans residues Ile569 to Phe589. At Thr590–Leu604 the chain is on the cytoplasmic side. A helical membrane pass occupies residues Met605–Ile625. Residues Arg626 to Cys641 are Extracellular-facing. The helical transmembrane segment at Met642–Phe662 threads the bilayer. Topologically, residues Ser663–Pro676 are cytoplasmic. The helical transmembrane segment at Ile677–Ala697 threads the bilayer. Over Pro698–Ser718 the chain is Extracellular. A helical membrane pass occupies residues Ile719–Cys739. Topologically, residues Ala740–Lys754 are cytoplasmic. Residues Phe755–Thr775 form a helical membrane-spanning segment. Residues Phe776–Tyr779 lie on the Extracellular side of the membrane. Residues Met780–Phe800 traverse the membrane as a helical segment. At Pro801–Ile888 the chain is on the cytoplasmic side.

Belongs to the G-protein coupled receptor 3 family. As to quaternary structure, homodimer; disulfide-linked.

It is found in the cell membrane. Its function is as follows. Receptor activated by multiple ligands, including osteocalcin (BGLAP), basic amino acids, and various cations. Activated by amino acids with a preference for basic amino acids such as L-Lys, L-Arg and L-ornithine but also by small and polar amino acids. The L-alpha amino acids respond is augmented by divalent cations Ca(2+) and Mg(2+). Seems to act through a G(q)/G(11) and G(i)-coupled pathway. Regulates testosterone production by acting as a ligand for uncarboxylated osteocalcin hormone: osteocalcin-binding at the surface of Leydig cells initiates a signaling response that promotes the expression of enzymes required for testosterone synthesis in a CREB-dependent manner. Mediates the non-genomic effects of androgens in multiple tissue. May coordinate nutritional and hormonal anabolic signals through the sensing of extracellular amino acids, osteocalcin, divalent ions and its responsiveness to anabolic steroids. This is G-protein coupled receptor family C group 6 member A (GPRC6A) from Bos taurus (Bovine).